The chain runs to 257 residues: Acetylglutamate kinase (257 aa).

Substrate-binding positions include 41–42 (GG), arginine 63, and asparagine 156.

The protein belongs to the acetylglutamate kinase family. ArgB subfamily.

It is found in the cytoplasm. It catalyses the reaction N-acetyl-L-glutamate + ATP = N-acetyl-L-glutamyl 5-phosphate + ADP. Its pathway is amino-acid biosynthesis; L-arginine biosynthesis; N(2)-acetyl-L-ornithine from L-glutamate: step 2/4. Its function is as follows. Catalyzes the ATP-dependent phosphorylation of N-acetyl-L-glutamate. This is Acetylglutamate kinase from Geobacillus sp. (strain WCH70).